Reading from the N-terminus, the 520-residue chain is Putative cytochrome P450 CYP13A5 (520 aa).

Heme is bound at residue cysteine 464.

The protein belongs to the cytochrome P450 family. The cofactor is heme.

In terms of biological role, cytochromes P450 are a group of heme-thiolate monooxygenases. They oxidize a variety of structurally unrelated compounds, including steroids, fatty acids, and xenobiotics. This Caenorhabditis elegans protein is Putative cytochrome P450 CYP13A5 (cyp-13A5).